The sequence spans 405 residues: Acetate kinase (405 aa).

Position 7 (asparagine 7) interacts with Mg(2+). Lysine 14 lines the ATP pocket. Arginine 98 serves as a coordination point for substrate. Aspartate 155 acts as the Proton donor/acceptor in catalysis. ATP is bound by residues histidine 214 to glycine 218, aspartate 289 to arginine 291, and glycine 337 to asparagine 341. Position 390 (glutamate 390) interacts with Mg(2+).

Belongs to the acetokinase family. Homodimer. The cofactor is Mg(2+). Mn(2+) is required as a cofactor.

Its subcellular location is the cytoplasm. The catalysed reaction is acetate + ATP = acetyl phosphate + ADP. The protein operates within metabolic intermediate biosynthesis; acetyl-CoA biosynthesis; acetyl-CoA from acetate: step 1/2. In terms of biological role, catalyzes the formation of acetyl phosphate from acetate and ATP. Can also catalyze the reverse reaction. The protein is Acetate kinase of Gloeothece citriformis (strain PCC 7424) (Cyanothece sp. (strain PCC 7424)).